A 262-amino-acid polypeptide reads, in one-letter code: 3-methyl-2-oxobutanoate hydroxymethyltransferase (262 aa).

2 residues coordinate Mg(2+): Asp44 and Asp83. 3-methyl-2-oxobutanoate is bound by residues Asp44–Ser45, Asp83, and Lys111. Position 113 (Glu113) interacts with Mg(2+). The active-site Proton acceptor is the Glu180.

The protein belongs to the PanB family. As to quaternary structure, homodecamer; pentamer of dimers. Requires Mg(2+) as cofactor.

The protein resides in the cytoplasm. It carries out the reaction 3-methyl-2-oxobutanoate + (6R)-5,10-methylene-5,6,7,8-tetrahydrofolate + H2O = 2-dehydropantoate + (6S)-5,6,7,8-tetrahydrofolate. It participates in cofactor biosynthesis; (R)-pantothenate biosynthesis; (R)-pantoate from 3-methyl-2-oxobutanoate: step 1/2. In terms of biological role, catalyzes the reversible reaction in which hydroxymethyl group from 5,10-methylenetetrahydrofolate is transferred onto alpha-ketoisovalerate to form ketopantoate. This is 3-methyl-2-oxobutanoate hydroxymethyltransferase from Alcanivorax borkumensis (strain ATCC 700651 / DSM 11573 / NCIMB 13689 / SK2).